Reading from the N-terminus, the 432-residue chain is Glutamyl-tRNA reductase (432 aa).

Residues 55 to 58, Ser114, 119 to 121, and Gln125 contribute to the substrate site; these read TCNR and ETQ. The Nucleophile role is filled by Cys56. 194–199 serves as a coordination point for NADP(+); that stretch reads GAGEMI.

This sequence belongs to the glutamyl-tRNA reductase family. As to quaternary structure, homodimer.

The catalysed reaction is (S)-4-amino-5-oxopentanoate + tRNA(Glu) + NADP(+) = L-glutamyl-tRNA(Glu) + NADPH + H(+). It participates in porphyrin-containing compound metabolism; protoporphyrin-IX biosynthesis; 5-aminolevulinate from L-glutamyl-tRNA(Glu): step 1/2. In terms of biological role, catalyzes the NADPH-dependent reduction of glutamyl-tRNA(Glu) to glutamate 1-semialdehyde (GSA). The protein is Glutamyl-tRNA reductase of Burkholderia ambifaria (strain MC40-6).